Consider the following 348-residue polypeptide: MTIAPEGRRLLRVEARNSETPIETKPRWIRNQVKNGPEYQDMKERVAGASLHTVCQEAGCPNIHECWESREATFLIGGANCSRRCDFCMINSARPEPLDRGEPLRVAESVREMQLNYSTITGVTRDDLDDEGAWLYSEVVRKIHELNPHTGVENLVPDFSGKKDLLQEVFESRPEVFAHNVETVPRIFKRIRPAFRYERSLDVIRQARDFGLVTKSNLILGMGETKEEITEALQDLHDAGCDIITITQYLRPGPLFHPIERWVKPEEFLEHADAAKEMGFAAVMSGPLVRSSYRAGRLYAQAMEFRGEEIPAHLAHLKDTSGGSTAQEASTLLERYGASEDTPVVSFN.

[4Fe-4S] cluster contacts are provided by Cys-55, Cys-60, Cys-66, Cys-81, Cys-85, Cys-88, and Ser-292. Positions 67–281 constitute a Radical SAM core domain; the sequence is WESREATFLI…ADAAKEMGFA (215 aa).

Belongs to the radical SAM superfamily. Lipoyl synthase family. [4Fe-4S] cluster is required as a cofactor.

The protein localises to the cytoplasm. It carries out the reaction [[Fe-S] cluster scaffold protein carrying a second [4Fe-4S](2+) cluster] + N(6)-octanoyl-L-lysyl-[protein] + 2 oxidized [2Fe-2S]-[ferredoxin] + 2 S-adenosyl-L-methionine + 4 H(+) = [[Fe-S] cluster scaffold protein] + N(6)-[(R)-dihydrolipoyl]-L-lysyl-[protein] + 4 Fe(3+) + 2 hydrogen sulfide + 2 5'-deoxyadenosine + 2 L-methionine + 2 reduced [2Fe-2S]-[ferredoxin]. It functions in the pathway protein modification; protein lipoylation via endogenous pathway; protein N(6)-(lipoyl)lysine from octanoyl-[acyl-carrier-protein]: step 2/2. Functionally, catalyzes the radical-mediated insertion of two sulfur atoms into the C-6 and C-8 positions of the octanoyl moiety bound to the lipoyl domains of lipoate-dependent enzymes, thereby converting the octanoylated domains into lipoylated derivatives. This Corynebacterium glutamicum (strain R) protein is Lipoyl synthase.